The following is a 91-amino-acid chain: Large ribosomal subunit protein eL37B (91 aa).

Residues Cys-19, Cys-22, Cys-34, and Cys-37 each contribute to the Zn(2+) site. A C4-type zinc finger spans residues 19-37 (CRRCGKRSFHIQKSTCACC).

It belongs to the eukaryotic ribosomal protein eL37 family. In terms of assembly, component of the large ribosomal subunit (LSU). Mature yeast ribosomes consist of a small (40S) and a large (60S) subunit. The 40S small subunit contains 1 molecule of ribosomal RNA (18S rRNA) and at least 33 different proteins. The large 60S subunit contains 3 rRNA molecules (25S, 5.8S and 5S rRNA) and at least 46 different proteins. Zn(2+) is required as a cofactor.

The protein localises to the cytoplasm. Functionally, component of the ribosome, a large ribonucleoprotein complex responsible for the synthesis of proteins in the cell. The small ribosomal subunit (SSU) binds messenger RNAs (mRNAs) and translates the encoded message by selecting cognate aminoacyl-transfer RNA (tRNA) molecules. The large subunit (LSU) contains the ribosomal catalytic site termed the peptidyl transferase center (PTC), which catalyzes the formation of peptide bonds, thereby polymerizing the amino acids delivered by tRNAs into a polypeptide chain. The nascent polypeptides leave the ribosome through a tunnel in the LSU and interact with protein factors that function in enzymatic processing, targeting, and the membrane insertion of nascent chains at the exit of the ribosomal tunnel. The sequence is that of Large ribosomal subunit protein eL37B (rpl3702) from Schizosaccharomyces pombe (strain 972 / ATCC 24843) (Fission yeast).